Here is a 766-residue protein sequence, read N- to C-terminus: ABC-type oligopeptide transporter ABCB9 (766 aa).

8 helical membrane-spanning segments follow: residues 7 to 27, 47 to 67, 84 to 104, 116 to 136, 185 to 205, 225 to 245, 319 to 339, and 416 to 436; these read VVVT…IYVF, VLDL…ATIG, LVIT…LLLF, FWAL…LWWL, VAFL…ETFL, FSTA…AAGI, VFMF…FPII, and SGLT…HLVI. An ABC transmembrane type-1 domain is found at 188 to 471; it reads LVAASFFLIV…VGSVYSGLMQ (284 aa). The ABC transporter domain maps to 504 to 740; it reads VDFENVTFTY…GGLYAKLVQR (237 aa). Position 539–546 (539–546) interacts with ATP; that stretch reads GPSGSGKS.

Belongs to the ABC transporter superfamily. ABCB family. MHC peptide exporter (TC 3.A.1.209) subfamily. In terms of assembly, homodimer. Interacts (via TMD0 region) with LAMP1; this interaction strongly stabilizes ABCB9 and protects ABCB9 against lysosomal degradation. Interacts (via TMD0 region) with LAMP2 (isoform LAMP-2B). Interacts (via TMD0) with YIF1B; this interaction allows (but is not essential) the ER-to-Golgi trafficking and strongly depends on a salt bridge within TMD0. As to expression, highly expressed in testis, and at moderate levels in brain, spinal cord, and thyroid. Not expressed in monocytes but strongly expressed during differentiation of monocytes to dendritic cells and macrophages.

Its subcellular location is the lysosome membrane. The catalysed reaction is a [oligopeptide](in) + ATP + H2O = a [oligopeptide](out) + ADP + phosphate + H(+). Transport activity is limited by threshold levels of luminal peptide. ATP hydrolysis is reduced in the presence of the spatial challenging 18-mer peptide by 50% and the branched 16-mer peptide by 75%. Transport rate of the longer peptides is strongly reduced. Its function is as follows. ATP-dependent low-affinity peptide transporter which translocates a broad spectrum of peptides from the cytosol to the lysosomal lumen for degradation. Displays a broad peptide length specificity from 6-mer up to at least 59-mer peptides with an optimum of 23-mers. Binds and transports smaller and larger peptides with the same affinity. Favors positively charged, aromatic or hydrophobic residues in the N- and C-terminal positions whereas negatively charged residues as well as asparagine and methionine are not favored. The chain is ABC-type oligopeptide transporter ABCB9 from Homo sapiens (Human).